A 275-amino-acid chain; its full sequence is Voltage-dependent calcium channel gamma-5 subunit (275 aa).

4 helical membrane passes run 8–28 (ALTL…GIAV), 103–123 (FPLV…IGHI), 129–149 (ILAF…VVGL), and 176–196 (GWSF…GVMS).

It belongs to the PMP-22/EMP/MP20 family. CACNG subfamily. The L-type calcium channel is composed of five subunits: alpha-1, alpha-2/delta, beta and gamma. Acts as an auxiliary subunit for AMPA-selective glutamate receptors (AMPARs). Found in a complex with GRIA1, GRIA2, GRIA3, GRIA4, CNIH2, CNIH3, CACNG2, CACNG3, CACNG4, CACNG7 and CACNG8. Interacts with GRIA1, GRIA2, GRIA3 and GRIA4.

It localises to the membrane. It is found in the postsynaptic density membrane. Its function is as follows. Regulates the gating properties of AMPA-selective glutamate receptors (AMPARs). Modulates their gating properties by accelerating their rates of activation, deactivation and desensitization. Displays subunit-specific AMPA receptor regulation. Shows specificity for GRIA1, GRIA4 and the long isoform of GRIA2. Thought to stabilize the calcium channel in an inactivated (closed) state. This chain is Voltage-dependent calcium channel gamma-5 subunit (CACNG5), found in Homo sapiens (Human).